A 433-amino-acid polypeptide reads, in one-letter code: uncharacterized protein (433 aa).

The N-terminal stretch at 1-26 is a signal peptide; the sequence is MTRRAEFEMGLFVILQSMFLISLCSS. N-linked (GlcNAc...) asparagine glycosylation is found at N59, N72, N125, N159, N210, N275, N282, and N323. A lipid anchor (GPI-anchor amidated alanine) is attached at A405. A propeptide spans 406–433 (removed in mature form); that stretch reads SSQPRLHDEGVTRLVIFVLSMLLVMLLS.

The protein localises to the cell membrane. This is an uncharacterized protein from Arabidopsis thaliana (Mouse-ear cress).